The primary structure comprises 169 residues: Ribosomal RNA large subunit methyltransferase H (169 aa).

S-adenosyl-L-methionine-binding positions include Leu85, Gly117, and 136-141 (LGELTW).

Belongs to the RNA methyltransferase RlmH family. In terms of assembly, homodimer.

The protein resides in the cytoplasm. The catalysed reaction is pseudouridine(1915) in 23S rRNA + S-adenosyl-L-methionine = N(3)-methylpseudouridine(1915) in 23S rRNA + S-adenosyl-L-homocysteine + H(+). Specifically methylates the pseudouridine at position 1915 (m3Psi1915) in 23S rRNA. This Brucella abortus biovar 1 (strain 9-941) protein is Ribosomal RNA large subunit methyltransferase H.